The primary structure comprises 220 residues: Flavin-dependent thymidylate synthase (220 aa).

Residues Met1–Tyr208 enclose the ThyX domain. Residues Thr55, Arg78–Arg80, and Glu86 contribute to the FAD site. DUMP is bound by residues Gln75–Arg78, Glu86–Arg90, and Arg147. The ThyX motif signature appears at Arg78–Ser88. FAD contacts are provided by residues Asn163–Arg165 and Asn169. Arg174 contacts dUMP. Arg174 serves as the catalytic Involved in ionization of N3 of dUMP, leading to its activation.

The protein belongs to the thymidylate synthase ThyX family. As to quaternary structure, homotetramer. The cofactor is FAD.

It carries out the reaction dUMP + (6R)-5,10-methylene-5,6,7,8-tetrahydrofolate + NADPH + H(+) = dTMP + (6S)-5,6,7,8-tetrahydrofolate + NADP(+). It participates in pyrimidine metabolism; dTTP biosynthesis. Functionally, catalyzes the reductive methylation of 2'-deoxyuridine-5'-monophosphate (dUMP) to 2'-deoxythymidine-5'-monophosphate (dTMP) while utilizing 5,10-methylenetetrahydrofolate (mTHF) as the methyl donor, and NADPH and FADH(2) as the reductant. The polypeptide is Flavin-dependent thymidylate synthase (Thermotoga petrophila (strain ATCC BAA-488 / DSM 13995 / JCM 10881 / RKU-1)).